Consider the following 293-residue polypeptide: Phospholipid scramblase 2 (293 aa).

The disordered stretch occupies residues 1–39 (MDKQNVQMNPPHPGTNLTGPPGHIGYPGPQAGYAVPPPG). A proline-rich domain (PRD) region spans residues 1 to 66 (MDKQNVQMNP…GHPGAPTQVP (66 aa)). At 1 to 270 (MDKQNVQMNP…IQFPLDLDVK (270 aa)) the chain is on the cytoplasmic side. The residue at position 143 (Thr-143) is a Phosphothreonine; by PKC. 4 S-palmitoyl cysteine lipidation sites follow: Cys-166, Cys-167, Cys-170, and Cys-171. Residues 271 to 287 (MKAVMLGACFLIDFMFF) form a helical membrane-spanning segment. The Extracellular segment spans residues 288-293 (EMTRGE).

This sequence belongs to the phospholipid scramblase family. Ca(2+) is required as a cofactor.

Its subcellular location is the membrane. The enzyme catalyses a 1,2-diacyl-sn-glycero-3-phosphocholine(in) = a 1,2-diacyl-sn-glycero-3-phosphocholine(out). May catalyze calcium-induced ATP-independent rapid bidirectional and non-specific movement of phospholipids (lipid scrambling or lipid flip-flop) between the inner and outer leaflet of the plasma membrane. The sequence is that of Phospholipid scramblase 2 from Bos taurus (Bovine).